The sequence spans 267 residues: Phosphate import ATP-binding protein PstB 2 (267 aa).

Positions 21–262 constitute an ABC transporter domain; that stretch reads LSTKDVHVYY…AKLQSTNDYV (242 aa). 53 to 60 is an ATP binding site; sequence GPSGSGKS.

Belongs to the ABC transporter superfamily. Phosphate importer (TC 3.A.1.7) family. As to quaternary structure, the complex is composed of two ATP-binding proteins (PstB), two transmembrane proteins (PstC and PstA) and a solute-binding protein (PstS).

The protein resides in the cell membrane. It carries out the reaction phosphate(out) + ATP + H2O = ADP + 2 phosphate(in) + H(+). Its function is as follows. Part of the ABC transporter complex PstSACB involved in phosphate import. Responsible for energy coupling to the transport system. The chain is Phosphate import ATP-binding protein PstB 2 from Streptococcus pneumoniae (strain ATCC BAA-255 / R6).